Reading from the N-terminus, the 359-residue chain is Molybdenum import ATP-binding protein ModC (359 aa).

One can recognise an ABC transporter domain in the interval 1 to 236 (MNTEIKARFR…IDLPAAFADD (236 aa)). 34-41 (GHSGSGKT) contributes to the ATP binding site. Residues 294 to 359 (QSSILNCVSA…AQIKAVALLA (66 aa)) enclose the Mop domain.

Belongs to the ABC transporter superfamily. Molybdate importer (TC 3.A.1.8) family. In terms of assembly, the complex is composed of two ATP-binding proteins (ModC), two transmembrane proteins (ModB) and a solute-binding protein (ModA).

Its subcellular location is the cell inner membrane. It catalyses the reaction molybdate(out) + ATP + H2O = molybdate(in) + ADP + phosphate + H(+). Part of the ABC transporter complex ModABC involved in molybdenum import. Responsible for energy coupling to the transport system. The chain is Molybdenum import ATP-binding protein ModC from Dechloromonas aromatica (strain RCB).